Consider the following 483-residue polypeptide: MLLKKRSPTSILGTLALTGIVISSMIGGGIFSLPQNMVASASAGAVMLAWMLSGIGIFFIANTFKTLSIIRPDLKAGIYTYSREGFGPYVGFTIAWGYWLCQIFGNVDYAVITMDALNYFFPPYFAGGNTIPAILLGSLLIWIFNYIVLRGIRQASFVNIIGAVCTLIPLLLFILITARFFKFSIFKTDFWGTAPQHTLGSIGSQLKSTMLVTLWAFIGIEGAVVISGRAANLSSVGKATILGFSGCLLIYVLLSLLPFGSLFQYQLAKIADPSTAGVLNILVGKWGEVLMNTGLLIAVLTSWLSWTILASEIPYAAAKNGTFPECFAIENSKHAPSFSLFMTSGLMQITMLLVYFSSNAWNTMLEITGVMVLPAYLTSSLFLVKFSLSKKYPKQAAIKARIAMITSLLGSLYSLWLIYAGGLQHLFMVAILLALGIPFYVDSGIRHKQEKTFLNRKEILKMTIVALAALLAIFLFSANKIHL.

The next 12 membrane-spanning stretches (helical) occupy residues 11–31, 41–61, 85–105, 124–144, 157–177, 208–228, 239–259, 289–309, 336–356, 364–384, 415–435, and 458–478; these read ILGT…GGIF, ASAG…FFIA, GFGP…QIFG, YFAG…IWIF, FVNI…ILIT, STML…VISG, ATIL…LLPF, VLMN…WTIL, PSFS…LVYF, MLEI…LFLV, LWLI…LLAL, and EILK…LFSA.

Belongs to the amino acid-polyamine-organocation (APC) superfamily. Basic amino acid/polyamine antiporter (APA) (TC 2.A.3.2) family.

It is found in the cell inner membrane. Catalyzes the exchange of L-arginine for agmatine. The arginine uptake by the bacterium in the macrophage may be a virulence factor against the host innate immune response. The chain is Arginine/agmatine antiporter (aaxC) from Chlamydia trachomatis serovar A (strain ATCC VR-571B / DSM 19440 / HAR-13).